The primary structure comprises 355 residues: Chorismate synthase (355 aa).

NADP(+)-binding residues include arginine 44 and arginine 49. FMN-binding positions include 121-123 (HFS), glycine 277, 292-296 (KPTPS), and arginine 319.

It belongs to the chorismate synthase family. It depends on FMNH2 as a cofactor.

The enzyme catalyses 5-O-(1-carboxyvinyl)-3-phosphoshikimate = chorismate + phosphate. Its pathway is metabolic intermediate biosynthesis; chorismate biosynthesis; chorismate from D-erythrose 4-phosphate and phosphoenolpyruvate: step 7/7. Functionally, catalyzes the anti-1,4-elimination of the C-3 phosphate and the C-6 proR hydrogen from 5-enolpyruvylshikimate-3-phosphate (EPSP) to yield chorismate, which is the branch point compound that serves as the starting substrate for the three terminal pathways of aromatic amino acid biosynthesis. This reaction introduces a second double bond into the aromatic ring system. The chain is Chorismate synthase from Thermococcus kodakarensis (strain ATCC BAA-918 / JCM 12380 / KOD1) (Pyrococcus kodakaraensis (strain KOD1)).